We begin with the raw amino-acid sequence, 358 residues long: 5-amino-6-(D-ribitylamino)uracil--L-tyrosine 4-hydroxyphenyl transferase 2 (358 aa).

A Radical SAM core domain is found at 45-292 (VTFVKNTNIE…ESIKNIQAPR (248 aa)). Residues cysteine 59, cysteine 63, and cysteine 66 each contribute to the [4Fe-4S] cluster site.

This sequence belongs to the radical SAM superfamily. CofH family. Consists of two subunits, CofG and CofH. The cofactor is [4Fe-4S] cluster.

The enzyme catalyses 5-amino-6-(D-ribitylamino)uracil + L-tyrosine + S-adenosyl-L-methionine = 5-amino-5-(4-hydroxybenzyl)-6-(D-ribitylimino)-5,6-dihydrouracil + 2-iminoacetate + 5'-deoxyadenosine + L-methionine + H(+). Its pathway is cofactor biosynthesis; coenzyme F0 biosynthesis. Catalyzes the radical-mediated synthesis of 5-amino-5-(4-hydroxybenzyl)-6-(D-ribitylimino)-5,6-dihydrouracil from 5-amino-6-(D-ribitylamino)uracil and L-tyrosine. The sequence is that of 5-amino-6-(D-ribitylamino)uracil--L-tyrosine 4-hydroxyphenyl transferase 2 from Methanococcus maripaludis (strain DSM 14266 / JCM 13030 / NBRC 101832 / S2 / LL).